The following is a 209-amino-acid chain: Uracil phosphoribosyltransferase (209 aa).

5-phospho-alpha-D-ribose 1-diphosphate-binding positions include R79, R104, and 131 to 139; that span reads DPMLATGVS. Uracil is bound by residues I194 and 199–201; that span reads GDA. 5-phospho-alpha-D-ribose 1-diphosphate is bound at residue D200.

Belongs to the UPRTase family. Mg(2+) serves as cofactor.

The enzyme catalyses UMP + diphosphate = 5-phospho-alpha-D-ribose 1-diphosphate + uracil. Its pathway is pyrimidine metabolism; UMP biosynthesis via salvage pathway; UMP from uracil: step 1/1. With respect to regulation, allosterically activated by GTP. In terms of biological role, catalyzes the conversion of uracil and 5-phospho-alpha-D-ribose 1-diphosphate (PRPP) to UMP and diphosphate. This Thermotoga neapolitana (strain ATCC 49049 / DSM 4359 / NBRC 107923 / NS-E) protein is Uracil phosphoribosyltransferase.